Here is a 183-residue protein sequence, read N- to C-terminus: uncharacterized protein (183 aa).

The segment at 1-36 is disordered; sequence MAKRGNKKKQEAPLSLGKHTVGGRVGKPTNAKTGSA. The RRM domain occupies 100-174; that stretch reads TNVVIENLAP…FKLSCYIKKN (75 aa).

It is found in the nucleus. It localises to the nucleolus. This is an uncharacterized protein from Schizosaccharomyces pombe (strain 972 / ATCC 24843) (Fission yeast).